The sequence spans 270 residues: L-cystine-binding protein TcyK (270 aa).

The signal sequence occupies residues 1–20; that stretch reads MKTKTAFMAILFSLITVLSA. Cys21 carries the N-palmitoyl cysteine lipid modification. Cys21 carries S-diacylglycerol cysteine lipidation.

This sequence belongs to the bacterial solute-binding protein 3 family. The complex is composed of two ATP-binding proteins (TcyN), two transmembrane proteins (TcyL and TcyM) and two solute-binding proteins (TcyJ and TcyK).

It localises to the cell membrane. Part of the ABC transporter complex TcyJKLMN involved in L-cystine import. Is also involved in cystathionine, djenkolate, and S-methylcysteine transport. In Bacillus subtilis (strain 168), this protein is L-cystine-binding protein TcyK (tcyK).